The following is a 535-amino-acid chain: Berberine bridge enzyme-like 3 (535 aa).

A signal peptide spans 1-19 (MKEALFGLYLVLLVSGLEA). Cysteine 32 and cysteine 95 are disulfide-bonded. N-linked (GlcNAc...) asparagine glycosylation occurs at asparagine 52. The FAD-binding PCMH-type domain occupies 73-247 (NNKNLLAIVV…LSWKINLVEV (175 aa)). The segment at residues 110 to 172 (HDNEGLSYVS…QTLAFPAGIC (63 aa)) is a cross-link (6-(S-cysteinyl)-8alpha-(pros-histidyl)-FAD (His-Cys)). Asparagine 214, asparagine 257, asparagine 292, asparagine 321, asparagine 341, asparagine 415, asparagine 439, and asparagine 444 each carry an N-linked (GlcNAc...) asparagine glycan.

This sequence belongs to the oxygen-dependent FAD-linked oxidoreductase family. It depends on FAD as a cofactor. Post-translationally, the FAD cofactor is bound via a bicovalent 6-S-cysteinyl, 8alpha-N1-histidyl FAD linkage.

It localises to the endoplasmic reticulum. The protein resides in the cell membrane. Its subcellular location is the secreted. The protein localises to the cell wall. Flavin-dependent oxidoreductase involved in the biosynthetic pathway to 4-hydroxyindole-3-carbonyl nitrile (4-OH-ICN), a cyanogenic metabolite required for inducible pathogen defense. Converts indole cyanohydrin into indole-3-carbonyl nitrile (ICN). The sequence is that of Berberine bridge enzyme-like 3 from Arabidopsis thaliana (Mouse-ear cress).